Reading from the N-terminus, the 347-residue chain is Calcium homeostasis modulator protein 3 (347 aa).

Over 1 to 20 (MDRFRMLFQHLQSSSESVMN) the chain is Cytoplasmic. The segment at 9–36 (QHLQSSSESVMNGICLLLAAVTVKIYSS) is central pore. The chain crosses the membrane as a helical span at residues 21 to 36 (GICLLLAAVTVKIYSS). Residues 37 to 48 (LDFNCPCLERYN) are Extracellular-facing. Intrachain disulfides connect Cys-41–Cys-126 and Cys-43–Cys-157. Residues 49–71 (ALYGLGLLLTPPLALFLCGLLVN) form a helical membrane-spanning segment. Residues 72 to 98 (RQSVLMVEEWRRPAGHRRKDLGIIRYM) lie on the Cytoplasmic side of the membrane. A lipid anchor (S-palmitoyl cysteine) is attached at Cys-99. The helical transmembrane segment at 99–124 (CSSVLQRALAAPLVWILLALLDGKCF) threads the bilayer. Residues 125–176 (VCAFSNSVDPEKFLDFANMTPRQVQLFLAKVPCKEDELVKNSPARKAVSRYL) are Extracellular-facing. N-linked (GlcNAc...) asparagine glycosylation is present at Asn-142. Residues 177 to 202 (RCLSQAIGWSITLLVIVVAFLARCLR) traverse the membrane as a helical segment. 2 S-palmitoyl cysteine lipidation sites follow: Cys-200 and Cys-204. Residues 203–347 (PCFDQTVFLQ…GTKLCHQLNV (145 aa)) lie on the Cytoplasmic side of the membrane. Residues 265–290 (GGIPESQESSEPPELREDRDSGNGKA) form a disordered region. Over residues 277 to 286 (PELREDRDSG) the composition is skewed to basic and acidic residues.

It belongs to the CALHM family. In terms of assembly, associates with CALHM1 as a pore-forming subunit in a hetero-hexameric channel complex. Post-translationally, N-glycosylated. Palmitoylated by ZDHHC3 and ZDHHC15. Palmitoylation positively regulates CALHM1:CALHM3 channel conductance. Expressed in taste bud cells.

Its subcellular location is the basolateral cell membrane. It catalyses the reaction ATP(in) = ATP(out). The catalysed reaction is Ca(2+)(in) = Ca(2+)(out). The enzyme catalyses Na(+)(in) = Na(+)(out). It carries out the reaction K(+)(in) = K(+)(out). It catalyses the reaction chloride(in) = chloride(out). In terms of biological role, pore-forming subunit of gustatory voltage-gated ion channels required for sensory perception of sweet, bitter and umami tastes. With CALHM1 forms a fast-activating voltage-gated ATP-release channel in type II taste bud cells, ATP acting as a neurotransmitter to activate afferent neural gustatory pathways. Acts both as a voltage-gated and calcium-activated ion channel: mediates neuronal excitability in response to membrane depolarization and low extracellular Ca(2+) concentration. Has poor ion selectivity and forms a wide pore (around 14 Angstroms) that mediates permeation of small ions including Ca(2+), Na(+), K(+) and Cl(-), as well as larger ions such as ATP(4-). This Mus musculus (Mouse) protein is Calcium homeostasis modulator protein 3.